We begin with the raw amino-acid sequence, 122 residues long: Small ribosomal subunit protein uS13 (122 aa).

Positions 99–122 (RGQRTHTNARTRKGPAKAIAGKKK) are disordered.

Belongs to the universal ribosomal protein uS13 family. In terms of assembly, part of the 30S ribosomal subunit. Forms a loose heterodimer with protein S19. Forms two bridges to the 50S subunit in the 70S ribosome.

In terms of biological role, located at the top of the head of the 30S subunit, it contacts several helices of the 16S rRNA. In the 70S ribosome it contacts the 23S rRNA (bridge B1a) and protein L5 of the 50S subunit (bridge B1b), connecting the 2 subunits; these bridges are implicated in subunit movement. Contacts the tRNAs in the A and P-sites. This is Small ribosomal subunit protein uS13 from Rhizobium etli (strain ATCC 51251 / DSM 11541 / JCM 21823 / NBRC 15573 / CFN 42).